Reading from the N-terminus, the 188-residue chain is Elongation factor P (188 aa).

The protein belongs to the elongation factor P family.

It is found in the cytoplasm. The protein operates within protein biosynthesis; polypeptide chain elongation. Its function is as follows. Involved in peptide bond synthesis. Stimulates efficient translation and peptide-bond synthesis on native or reconstituted 70S ribosomes in vitro. Probably functions indirectly by altering the affinity of the ribosome for aminoacyl-tRNA, thus increasing their reactivity as acceptors for peptidyl transferase. The chain is Elongation factor P from Wolbachia pipientis wMel.